The following is a 327-amino-acid chain: Tetraacyldisaccharide 4'-kinase (327 aa).

Residue 52 to 59 (TLGGAGKT) coordinates ATP.

Belongs to the LpxK family.

It catalyses the reaction a lipid A disaccharide + ATP = a lipid IVA + ADP + H(+). It functions in the pathway glycolipid biosynthesis; lipid IV(A) biosynthesis; lipid IV(A) from (3R)-3-hydroxytetradecanoyl-[acyl-carrier-protein] and UDP-N-acetyl-alpha-D-glucosamine: step 6/6. Functionally, transfers the gamma-phosphate of ATP to the 4'-position of a tetraacyldisaccharide 1-phosphate intermediate (termed DS-1-P) to form tetraacyldisaccharide 1,4'-bis-phosphate (lipid IVA). The protein is Tetraacyldisaccharide 4'-kinase of Methylorubrum extorquens (strain CM4 / NCIMB 13688) (Methylobacterium extorquens).